The following is a 328-amino-acid chain: MLEDYYPSTTSYYHGGIDDDLYTAKWGMVMTFLDLNDSSLTPFEGTHFALIGFKSDKGVYINNGRVGAVESPAAIRTQLAKFPWHLGNQVMVYDVGNIDGPNRSLEQLQNSLSKAIKRMCDLNLKPIVLGGGHETAYGHYLGLRQSLSPSDDLAVINMDAHFDLRPYDQTGPNSGTGFRQMFDDAVADKRLFKYFVLGIQEHNNNLFLFDFVAKSKGIQFLTGQDIYQMGHQKVCRAIDRFLEGQERVYLTIDMDCFSVGAAPGVSAIQSLGVDPNLAVLVLQHIAASRKLVGFDVVEVSPPHDIDNHTANLAATFIFYLVQIMAQHS.

Mn(2+)-binding residues include His133, Asp159, His161, Asp163, Asp253, and Asp255.

The protein belongs to the arginase family. Requires Mn(2+) as cofactor.

It carries out the reaction N-formimidoyl-L-glutamate + H2O = formamide + L-glutamate. The protein operates within amino-acid degradation; L-histidine degradation into L-glutamate; L-glutamate from N-formimidoyl-L-glutamate (hydrolase route): step 1/1. Catalyzes the conversion of N-formimidoyl-L-glutamate to L-glutamate and formamide. The sequence is that of Formimidoylglutamase from Streptococcus pyogenes serotype M18 (strain MGAS8232).